The following is a 215-amino-acid chain: ATP phosphoribosyltransferase (215 aa).

This sequence belongs to the ATP phosphoribosyltransferase family. Short subfamily. As to quaternary structure, heteromultimer composed of HisG and HisZ subunits.

The protein localises to the cytoplasm. It catalyses the reaction 1-(5-phospho-beta-D-ribosyl)-ATP + diphosphate = 5-phospho-alpha-D-ribose 1-diphosphate + ATP. The protein operates within amino-acid biosynthesis; L-histidine biosynthesis; L-histidine from 5-phospho-alpha-D-ribose 1-diphosphate: step 1/9. Catalyzes the condensation of ATP and 5-phosphoribose 1-diphosphate to form N'-(5'-phosphoribosyl)-ATP (PR-ATP). Has a crucial role in the pathway because the rate of histidine biosynthesis seems to be controlled primarily by regulation of HisG enzymatic activity. This Cyanothece sp. (strain PCC 7425 / ATCC 29141) protein is ATP phosphoribosyltransferase.